The primary structure comprises 287 residues: ATP synthase gamma chain (287 aa).

Belongs to the ATPase gamma chain family. In terms of assembly, F-type ATPases have 2 components, CF(1) - the catalytic core - and CF(0) - the membrane proton channel. CF(1) has five subunits: alpha(3), beta(3), gamma(1), delta(1), epsilon(1). CF(0) has three main subunits: a, b and c.

Its subcellular location is the cell inner membrane. Produces ATP from ADP in the presence of a proton gradient across the membrane. The gamma chain is believed to be important in regulating ATPase activity and the flow of protons through the CF(0) complex. The sequence is that of ATP synthase gamma chain from Shigella boydii serotype 4 (strain Sb227).